A 257-amino-acid chain; its full sequence is MGRKFFVGGNWKCNGTQESVSKIVDTLNEPTIAANDVVTVVVSPPYVFLPDENAELKHEIQVAAQNCWVKKGGAFTGEVSAQMLANLGITWVILGHSERRTLLGESNEFVGKKAAYAQSEGLGVIACIGELLEEREAGKTFDVCFKQLKSFARFPAKPWDNVVVAYEPVWAIGTGKVASPEQAQEVHVAVRDWLKTNVSEEVASKTRIIYGGSVNGGNSLALAAQEDVDGFLVGGASLKGPEFATIINSVTAKKVAA.

Substrate contacts are provided by Asn10 and Lys12. The Electrophile role is filled by His96. Glu167 functions as the Proton acceptor in the catalytic mechanism.

Belongs to the triosephosphate isomerase family. In terms of assembly, homodimer. In terms of tissue distribution, higher levels found in leaves than in roots.

The protein resides in the cytoplasm. The enzyme catalyses D-glyceraldehyde 3-phosphate = dihydroxyacetone phosphate. Its pathway is carbohydrate biosynthesis; gluconeogenesis. It functions in the pathway carbohydrate degradation; glycolysis; D-glyceraldehyde 3-phosphate from glycerone phosphate: step 1/1. This Stellaria longipes (Longstalk starwort) protein is Triosephosphate isomerase, cytosolic (TPI).